The following is a 287-amino-acid chain: Universal stress protein Slr1230 (287 aa).

It belongs to the universal stress protein A family.

The protein is Universal stress protein Slr1230 of Synechocystis sp. (strain ATCC 27184 / PCC 6803 / Kazusa).